The chain runs to 306 residues: Ornithine carbamoyltransferase (306 aa).

Carbamoyl phosphate contacts are provided by residues 53-56 (STRT), glutamine 80, arginine 104, and 131-134 (HPCQ). L-ornithine contacts are provided by residues asparagine 162, aspartate 219, and 223-224 (SM). Carbamoyl phosphate contacts are provided by residues 259–260 (CL) and arginine 287.

The protein belongs to the aspartate/ornithine carbamoyltransferase superfamily. OTCase family.

The protein resides in the cytoplasm. It carries out the reaction carbamoyl phosphate + L-ornithine = L-citrulline + phosphate + H(+). The protein operates within amino-acid biosynthesis; L-arginine biosynthesis; L-arginine from L-ornithine and carbamoyl phosphate: step 1/3. Its function is as follows. Reversibly catalyzes the transfer of the carbamoyl group from carbamoyl phosphate (CP) to the N(epsilon) atom of ornithine (ORN) to produce L-citrulline. In Acinetobacter baylyi (strain ATCC 33305 / BD413 / ADP1), this protein is Ornithine carbamoyltransferase.